The sequence spans 282 residues: Transcription repressor OFP18 (282 aa).

The disordered stretch occupies residues 1–85; that stretch reads MVRKMKLPFL…YSSFSSTSHA (85 aa). Residues 15–35 are compositionally biased toward low complexity; sequence SSSSFSSNSSSSSSSWPWPSS. Residues 36-47 show a composition bias toward polar residues; that stretch reads HQQNLKTISSKA. Positions 66–85 are enriched in low complexity; sequence SFSSSPSSSSYSSFSSTSHA. One can recognise an OVATE domain in the interval 139-199; it reads LSLESNDPYT…FAAFVDLVLN (61 aa).

In terms of tissue distribution, expressed in roots and shoots.

The protein resides in the nucleus. Functionally, transcriptional repressor that regulates multiple aspects of plant growth and development through the regulation of BEL1-LIKE (BLH) and KNOX TALE (KNAT) homeodomain transcription factors. This chain is Transcription repressor OFP18 (OFP18), found in Arabidopsis thaliana (Mouse-ear cress).